The following is a 530-amino-acid chain: B3 domain-containing protein REM-like 3 (530 aa).

DNA-binding regions (TF-B3) lie at residues 11 to 103 and 144 to 241; these read KPHF…FGLS and DFVV…FPLE. The disordered stretch occupies residues 251-276; it reads SKKVKQEVEHEESVKEETNVESGKLK. Over residues 254–276 the composition is skewed to basic and acidic residues; sequence VKQEVEHEESVKEETNVESGKLK. 2 consecutive DNA-binding regions (TF-B3) follow at residues 296-393 and 431-530; these read NFVV…FPLE and SFVV…WDKK.

It is found in the nucleus. The sequence is that of B3 domain-containing protein REM-like 3 from Arabidopsis thaliana (Mouse-ear cress).